The following is a 288-amino-acid chain: Energy-coupling factor transporter ATP-binding protein EcfA2 (288 aa).

One can recognise an ABC transporter domain in the interval 3–245 (IEFKNVDYIY…PDWLKKHFLD (243 aa)). Residue 40–47 (GHTGSGKS) coordinates ATP.

Belongs to the ABC transporter superfamily. Energy-coupling factor EcfA family. As to quaternary structure, forms a stable energy-coupling factor (ECF) transporter complex composed of 2 membrane-embedded substrate-binding proteins (S component), 2 ATP-binding proteins (A component) and 2 transmembrane proteins (T component).

The protein resides in the cell membrane. In terms of biological role, ATP-binding (A) component of a common energy-coupling factor (ECF) ABC-transporter complex. Unlike classic ABC transporters this ECF transporter provides the energy necessary to transport a number of different substrates. In Lactobacillus gasseri (strain ATCC 33323 / DSM 20243 / BCRC 14619 / CIP 102991 / JCM 1131 / KCTC 3163 / NCIMB 11718 / NCTC 13722 / AM63), this protein is Energy-coupling factor transporter ATP-binding protein EcfA2.